Consider the following 360-residue polypeptide: Protein Wnt-2 (360 aa).

The first 25 residues, 1–25, serve as a signal peptide directing secretion; that stretch reads MNAPLGGIWLWLPLLLTWLTPEVNS. Cystine bridges form between Cys76–Cys87, Cys127–Cys135, Cys137–Cys157, Cys206–Cys220, Cys208–Cys215, Cys278–Cys309, Cys294–Cys304, Cys308–Cys348, Cys324–Cys339, Cys326–Cys336, and Cys331–Cys332. A lipid anchor (O-palmitoleoyl serine; by PORCN) is attached at Ser212. N-linked (GlcNAc...) asparagine glycosylation is present at Asn295.

Belongs to the Wnt family. Palmitoleoylation is required for efficient binding to frizzled receptors. Depalmitoleoylation leads to Wnt signaling pathway inhibition.

It localises to the secreted. Its subcellular location is the extracellular space. It is found in the extracellular matrix. In terms of biological role, ligand for members of the frizzled family of seven transmembrane receptors. Functions in the canonical Wnt signaling pathway that results in activation of transcription factors of the TCF/LEF family. Functions as a upstream regulator of FGF10 expression. Plays an important role in embryonic lung development. May contribute to embryonic brain development by regulating the proliferation of dopaminergic precursors and neurons. The chain is Protein Wnt-2 (WNT2) from Nomascus leucogenys (Northern white-cheeked gibbon).